Here is a 550-residue protein sequence, read N- to C-terminus: Phospholipase B-like 1 (550 aa).

Residues 1-39 form the signal peptide; sequence MCHRSHGRSLRPPSPLLLLLPLLLQSPWAAGAAEKHNSA. Asn72 carries N-linked (GlcNAc...) (high mannose) asparagine; alternate glycosylation. Asn72 is a glycosylation site (N-linked (GlcNAc...) (hybrid) asparagine; alternate). A propeptide spans 210 to 228 (removed in mature form); the sequence is LSPTKSSSLKKFKIWEMGH. Residues Asn309 and Asn412 are each glycosylated (N-linked (GlcNAc...) (high mannose) asparagine; alternate). Asn309 and Asn412 each carry an N-linked (GlcNAc...) (hybrid) asparagine; alternate glycan. 2 disulfides stabilise this stretch: Cys471/Cys476 and Cys475/Cys490. N-linked (GlcNAc...) (high mannose) asparagine; alternate glycosylation occurs at Asn527. Asn527 carries an N-linked (GlcNAc...) (hybrid) asparagine; alternate glycan.

Belongs to the phospholipase B-like family. In terms of assembly, may form a homodimer, each monomer is composed of a chain A and a chain B. In terms of processing, the maturation cleavages that produces chains A and B are required to open the putative substrate binding pocket. Both chains A and B remain associated in the mature protein.

It localises to the lysosome. Its function is as follows. Exhibits weak phospholipase activity, acting on various phospholipids, including phosphatidylcholine, phosphatidylinositol, phosphatidylethanolamine and lysophospholipids. However, in view of the small size of the putative binding pocket, it has been proposed that it may act rather as an amidase or a peptidase. The sequence is that of Phospholipase B-like 1 (Plbd1) from Rattus norvegicus (Rat).